The following is a 1210-amino-acid chain: ATPase family AAA domain-containing protein At1g05910 (1210 aa).

Positions 1 to 11 (MHPKRSSQGDG) are enriched in polar residues. 2 disordered regions span residues 1–32 (MHPK…LHGR) and 63–291 (LHKG…RTDD). The segment covering 97-109 (DYTDSSGAEDEDM) has biased composition (acidic residues). Over residues 130 to 146 (SRKDMDAELAPRREGLR) the composition is skewed to basic and acidic residues. The segment covering 167–226 (DTSEEKDGQDETENGNELDDADDGENEVEAEDEGNGEDEGDGEDEGEEDGDDDEEGDEEQ) has biased composition (acidic residues). Positions 227 to 244 (EGRKRYDLRNRAEVRRMP) are enriched in basic and acidic residues. The span at 276-286 (GGSRPHKRHRF) shows a compositional bias: basic residues. 422 to 429 (GPPGTGKT) is a binding site for ATP. Residues 856–883 (LNGKPDGPQPLPELPKVPKEPTGPKPAE) form a disordered region. In terms of domain architecture, Bromo spans 897 to 1000 (RLRMCLRDVC…DVVHGMLSQM (104 aa)). Residues 1057 to 1070 (DRDYEGLKKPKKTT) show a composition bias toward basic and acidic residues. Positions 1057 to 1151 (DRDYEGLKKP…EISSRTESVK (95 aa)) are disordered. A compositionally biased stretch (polar residues) spans 1080 to 1090 (DKSQNQDSGQE). Basic and acidic residues-rich tracts occupy residues 1108–1123 (DGDR…KEAS) and 1138–1151 (KSDK…ESVK).

It belongs to the AAA ATPase family.

This Arabidopsis thaliana (Mouse-ear cress) protein is ATPase family AAA domain-containing protein At1g05910.